A 198-amino-acid chain; its full sequence is Ribonuclease HII (198 aa).

The RNase H type-2 domain maps to Gln-10–Ser-198. 3 residues coordinate a divalent metal cation: Asp-16, Glu-17, and Asp-108.

It belongs to the RNase HII family. Mn(2+) is required as a cofactor. The cofactor is Mg(2+).

It is found in the cytoplasm. The catalysed reaction is Endonucleolytic cleavage to 5'-phosphomonoester.. Functionally, endonuclease that specifically degrades the RNA of RNA-DNA hybrids. The sequence is that of Ribonuclease HII from Citrobacter koseri (strain ATCC BAA-895 / CDC 4225-83 / SGSC4696).